The sequence spans 701 residues: MHSDELLVEILVEELPAQALLNEYKEMPKKLHALLNKRALEAGNIEIFYTPRRLCLLIKDFPLLTQETKEEFFGPPIKIAFNNEDKTQGLNALGLGFYQKLGLKDHQHFQTAFKNNKEVLYHAKIHEKEPTKDLIMPIVLEFLEGLNFGKSMRWGNVEKSFIRPIHNICVLFNGENFNGIEVKEYGFKTKQATKVHRQEGFDFIEVDSPKAYFEVLEKNHVILDPKKREAKILQEIKELETKHDIIVEIDRDLLDEVVAITEYPSALLGEFDKAFLKLPNEIITTSMKENQRYFAVFDQKSQEESPTLHNGFIVVSNAINKDKQKIIAGNQKVLKARLSDAVFFYENDLKKPLDNTPLESVVFVQGLGTLKDKMEREAIIAQYLTQKYAPSLNMPLEKALELIGRAVKIAKADLLSEVVYEFSELQGIMGYYYALKQNENELVALSVKEQYLPASENAPLPSSVFSAIVALSLKLDSLFSLFSAGKIPSGSKDPFALRRLSFGLLKIVAHYGLEFDLKADLKNLFEKVGVYQSFDLEILEKFLLERFHNLIDCNPSIIRSVLNTNERDIVKIIQKVKALKRFLDDPKNAQKKELLFSAFKRLANINKDRNPNESSEFSISLFKELQEHALFEAFNAIQTSAFEGLDSKIEAYFGLHAPLEEYFKSVLVMDKDIEIQKNRKNFLWGVYQSFLEIGDIKEIAI.

This sequence belongs to the class-II aminoacyl-tRNA synthetase family. Tetramer of two alpha and two beta subunits.

Its subcellular location is the cytoplasm. It catalyses the reaction tRNA(Gly) + glycine + ATP = glycyl-tRNA(Gly) + AMP + diphosphate. The polypeptide is Glycine--tRNA ligase beta subunit (Helicobacter pylori (strain HPAG1)).